Here is a 287-residue protein sequence, read N- to C-terminus: Bifunctional protein FolD (287 aa).

NADP(+) contacts are provided by residues 166-168 (GAS), S191, and I232.

The protein belongs to the tetrahydrofolate dehydrogenase/cyclohydrolase family. As to quaternary structure, homodimer.

It catalyses the reaction (6R)-5,10-methylene-5,6,7,8-tetrahydrofolate + NADP(+) = (6R)-5,10-methenyltetrahydrofolate + NADPH. The catalysed reaction is (6R)-5,10-methenyltetrahydrofolate + H2O = (6R)-10-formyltetrahydrofolate + H(+). The protein operates within one-carbon metabolism; tetrahydrofolate interconversion. In terms of biological role, catalyzes the oxidation of 5,10-methylenetetrahydrofolate to 5,10-methenyltetrahydrofolate and then the hydrolysis of 5,10-methenyltetrahydrofolate to 10-formyltetrahydrofolate. In Haemophilus ducreyi (strain 35000HP / ATCC 700724), this protein is Bifunctional protein FolD.